Reading from the N-terminus, the 356-residue chain is Cyclin-A1-4 (356 aa).

This sequence belongs to the cyclin family. Cyclin AB subfamily.

The polypeptide is Cyclin-A1-4 (CYCA1-4) (Oryza sativa subsp. japonica (Rice)).